The sequence spans 825 residues: MSSSSLRVLAIGNNPNILFYTSRFQLAKNIDLYHVNDSKSCQFEIETEYYGKDRFELENHFTSIEHLTEALSSKSSEAVFDIIIMSAPSLQELSSLASKLTSIIDSNTKIFLESSGFIQLEPFVKLSMESPHVNVFSILTDLDIRQIGPNHFKHFPSTAKENTIYLGESKSSTEKYSSGVITLLTTFEKLFAKLFSNIKINLCNFSSIEFLSQQWKLAISRICFDPLLIMFEQENPSDLDQQIIAKPLISGLVTEIITVAKTMGARLNSSHDNENSLLSLWKNSYHSTNKPPALVYHFIHQTTPLNIDILLLQTILLADDFGIKTPYLEFLYSVLSQFERLNSGKSKWFIRSDEKTQILQSLQKSQKNESALQTQITSLQGQISKLRQELLMQAKQHEMETNELKEKHQVALKAQAQAQAQAQSQAQTSIEALTPTEATNQSDTNEYKATGTPNLRDIEDMALYSVNYGDSPVRSPPPVVSSQPQMNSPLSSHSQTFGENNGTNDKLLQERELQLRKKELELQERELEFQKRALQQQRFNNSNNSIPRKPSFPQLQQSANVRSNSRGMHGTNGAMSQPASAGNFVDPISSSIAAYDPQQPPSLPLQQPQQSVQVQPFHSHSIKPTSRKNRNSNMPNIGNPSSINMSDFGRPPNNSSQTRLNSMPTHSIVNQNRLRSQQSKNKLNMPHATNPNNTFNQVPAPSLNNHVPTQRQFSSSTMIEVTNNNNKVNNSSSNPDISTNSVVHNAMQFTNTNNNTSSTVDINDPKNIAPPPTTSVSAPSTPTLSSSSQMANMASPSTDNGDNEEKNGGKKKRFGLFKKKNKSKK.

A coiled-coil region spans residues 366 to 423 (QKNESALQTQITSLQGQISKLRQELLMQAKQHEMETNELKEKHQVALKAQAQAQAQAQ). Ser471 is subject to Phosphoserine. Disordered stretches follow at residues 472-503 (PVRS…NNGT) and 538-664 (RFNN…NSMP). Low complexity predominate over residues 480 to 489 (VSSQPQMNSP). Over residues 490-503 (LSSHSQTFGENNGT) the composition is skewed to polar residues. The residue at position 496 (Thr496) is a Phosphothreonine. Ser551 bears the Phosphoserine mark. Positions 553 to 566 (PQLQQSANVRSNSR) are enriched in polar residues. A compositionally biased stretch (low complexity) spans 604–616 (PLQQPQQSVQVQP). Composition is skewed to polar residues over residues 631-645 (NSNM…SINM) and 652-664 (PNNS…NSMP). Phosphoserine is present on Ser662. 2 positions are modified to phosphothreonine: Thr739 and Thr756. Composition is skewed to low complexity over residues 750 to 759 (TNTNNNTSST) and 774 to 788 (TSVS…SSSS). The interval 750-825 (TNTNNNTSST…LFKKKNKSKK (76 aa)) is disordered. Position 757 is a phosphoserine (Ser757). Positions 789–798 (QMANMASPST) are enriched in polar residues. The segment covering 809 to 825 (GKKKRFGLFKKKNKSKK) has biased composition (basic residues).

This sequence belongs to the PAM1/SVL3 family.

The protein resides in the cytoplasm. Its subcellular location is the bud. The protein localises to the bud neck. It localises to the cell cortex. Its function is as follows. May have a vacuolar function. The protein is Styryl dye vacuolar localization protein 3 (SVL3) of Saccharomyces cerevisiae (strain ATCC 204508 / S288c) (Baker's yeast).